The sequence spans 129 residues: Glycine cleavage system H protein (129 aa).

One can recognise a Lipoyl-binding domain in the interval 24–106 (TYTVGITEHA…YGQGWIFKIK (83 aa)). Lys65 carries the N6-lipoyllysine modification.

This sequence belongs to the GcvH family. As to quaternary structure, the glycine cleavage system is composed of four proteins: P, T, L and H. The cofactor is (R)-lipoate.

Its function is as follows. The glycine cleavage system catalyzes the degradation of glycine. The H protein shuttles the methylamine group of glycine from the P protein to the T protein. The polypeptide is Glycine cleavage system H protein (Cronobacter sakazakii (strain ATCC BAA-894) (Enterobacter sakazakii)).